We begin with the raw amino-acid sequence, 369 residues long: 2-aminoethylphosphonate--pyruvate transaminase (369 aa).

At K193 the chain carries N6-(pyridoxal phosphate)lysine.

Belongs to the class-V pyridoxal-phosphate-dependent aminotransferase family. PhnW subfamily. In terms of assembly, homodimer. Pyridoxal 5'-phosphate serves as cofactor.

The catalysed reaction is (2-aminoethyl)phosphonate + pyruvate = phosphonoacetaldehyde + L-alanine. Its function is as follows. Involved in phosphonate degradation. This Burkholderia mallei (strain NCTC 10247) protein is 2-aminoethylphosphonate--pyruvate transaminase.